The primary structure comprises 163 residues: Nucleotide-binding protein CYB_0891 (163 aa).

The protein belongs to the YajQ family.

In terms of biological role, nucleotide-binding protein. The sequence is that of Nucleotide-binding protein CYB_0891 from Synechococcus sp. (strain JA-2-3B'a(2-13)) (Cyanobacteria bacterium Yellowstone B-Prime).